We begin with the raw amino-acid sequence, 117 residues long: Ribosome maturation factor RimP (117 aa).

This sequence belongs to the RimP family.

It localises to the cytoplasm. Required for maturation of 30S ribosomal subunits. The sequence is that of Ribosome maturation factor RimP from Rickettsia prowazekii (strain Madrid E).